We begin with the raw amino-acid sequence, 779 residues long: Ribonucleoside-diphosphate reductase large subunit (779 aa).

Substrate contacts are provided by residues Ser-178, 193 to 194 (SC), Gly-222, 420 to 424 (NLCIE), and 614 to 618 (PTATS). A disulfide bond links Cys-194 and Cys-440. Asn-420 acts as the Proton acceptor in catalysis. Cys-422 acts as the Cysteine radical intermediate in catalysis. Residue Glu-424 is the Proton acceptor of the active site.

It belongs to the ribonucleoside diphosphate reductase large chain family. In terms of assembly, heterotetramer composed of a homodimer of the large subunit (R1) and a homodimer of the small subunit (R2). Larger multisubunit protein complex are also active, composed of (R1)n(R2)n.

It catalyses the reaction a 2'-deoxyribonucleoside 5'-diphosphate + [thioredoxin]-disulfide + H2O = a ribonucleoside 5'-diphosphate + [thioredoxin]-dithiol. With respect to regulation, under complex allosteric control mediated by deoxynucleoside triphosphates and ATP binding. The type of nucleotide bound at the specificity site determines substrate preference. It seems probable that ATP makes the enzyme reduce CDP and UDP, dGTP favors ADP reduction and dTTP favors GDP reduction. Its function is as follows. Ribonucleoside-diphosphate reductase holoenzyme provides the precursors necessary for viral DNA synthesis. Allows virus growth in non-dividing cells. Catalyzes the biosynthesis of deoxyribonucleotides from the corresponding ribonucleotides. The polypeptide is Ribonucleoside-diphosphate reductase large subunit (African swine fever virus (isolate Tick/Malawi/Lil 20-1/1983) (ASFV)).